We begin with the raw amino-acid sequence, 537 residues long: DNA-directed primase/polymerase protein (537 aa).

The stretch at 1–22 (MLRKWEARVKQIEERASHYERK) forms a coiled coil. Substrate contacts are provided by residues Arg-76, 114 to 116 (DLE), 165 to 169 (KFSRH), 270 to 273 (RNFR), and Lys-279. Mn(2+) is bound by residues Asp-114 and Glu-116. Residues Cys-401, His-408, Cys-428, and Cys-433 each contribute to the Zn(2+) site. The short motif at 401–434 (CENIGRAHKSNNIMILVDLKNEVWYQKCHDPVCK) is the Zinc knuckle motif element. Residues 462–481 (SGETDDTSTSLTKDSQTPPS) form a disordered region. The segment at 462–536 (SGETDDTSTS…DELIIEALQN (75 aa)) is interaction with RPA1. Residues 468-478 (TSTSLTKDSQT) are compositionally biased toward low complexity. 2 short sequence motifs (RPA1-binding motif) span residues 494–507 (WDDE…EATE) and 524–532 (DIPDELIIE).

Belongs to the eukaryotic-type primase small subunit family. Interacts with RPA1; leading to recruitment to chromatin and stimulate DNA primase activity. Interacts with SSBP1. Interacts with POLDIP2; leading to enhance DNA polymerase activity. Mn(2+) is required as a cofactor.

Its subcellular location is the nucleus. It localises to the mitochondrion matrix. The protein localises to the chromosome. It carries out the reaction ssDNA + n NTP = ssDNA/pppN(pN)n-1 hybrid + (n-1) diphosphate.. The catalysed reaction is DNA(n) + a 2'-deoxyribonucleoside 5'-triphosphate = DNA(n+1) + diphosphate. Functionally, DNA primase and DNA polymerase required to tolerate replication-stalling lesions by bypassing them. Required to facilitate mitochondrial and nuclear replication fork progression by initiating de novo DNA synthesis using dNTPs and acting as an error-prone DNA polymerase able to bypass certain DNA lesions. Shows a high capacity to tolerate DNA damage lesions such as 8oxoG and abasic sites in DNA. Provides different translesion synthesis alternatives when DNA replication is stalled: able to synthesize DNA primers downstream of lesions, such as ultraviolet (UV) lesions, R-loops and G-quadruplexes, to allow DNA replication to continue. Can also realign primers ahead of 'unreadable lesions' such as abasic sites and 6-4 photoproduct (6-4 pyrimidine-pyrimidinone), thereby skipping the lesion. Repriming avoids fork degradation while leading to accumulation of internal ssDNA gaps behind the forks. Also able to incorporate nucleotides opposite DNA lesions such as 8oxoG, like a regular translesion synthesis DNA polymerase. Also required for reinitiating stalled forks after UV damage during nuclear DNA replication. Required for mitochondrial DNA (mtDNA) synthesis and replication, by reinitiating synthesis after UV damage or in the presence of chain-terminating nucleotides. Prevents APOBEC family-mediated DNA mutagenesis by repriming downstream of abasic site to prohibit error-prone translesion synthesis. Has non-overlapping function with POLH. In addition to its role in DNA damage response, also required to maintain efficient nuclear and mitochondrial DNA replication in unperturbed cells. The sequence is that of DNA-directed primase/polymerase protein from Mus musculus (Mouse).